The primary structure comprises 422 residues: UDP-N-acetylglucosamine 1-carboxyvinyltransferase 2 (422 aa).

22 to 23 (KN) provides a ligand contact to phosphoenolpyruvate. R93 contacts UDP-N-acetyl-alpha-D-glucosamine. The Proton donor role is filled by C117. C117 carries the post-translational modification 2-(S-cysteinyl)pyruvic acid O-phosphothioketal. UDP-N-acetyl-alpha-D-glucosamine-binding positions include 122–126 (RPVDL), D308, and I330.

This sequence belongs to the EPSP synthase family. MurA subfamily.

It is found in the cytoplasm. The catalysed reaction is phosphoenolpyruvate + UDP-N-acetyl-alpha-D-glucosamine = UDP-N-acetyl-3-O-(1-carboxyvinyl)-alpha-D-glucosamine + phosphate. The protein operates within cell wall biogenesis; peptidoglycan biosynthesis. Functionally, cell wall formation. Adds enolpyruvyl to UDP-N-acetylglucosamine. The sequence is that of UDP-N-acetylglucosamine 1-carboxyvinyltransferase 2 from Legionella pneumophila (strain Lens).